Here is a 302-residue protein sequence, read N- to C-terminus: Glycine--tRNA ligase alpha subunit (302 aa).

The protein belongs to the class-II aminoacyl-tRNA synthetase family. In terms of assembly, tetramer of two alpha and two beta subunits.

It localises to the cytoplasm. It carries out the reaction tRNA(Gly) + glycine + ATP = glycyl-tRNA(Gly) + AMP + diphosphate. This Baumannia cicadellinicola subsp. Homalodisca coagulata protein is Glycine--tRNA ligase alpha subunit.